Here is a 380-residue protein sequence, read N- to C-terminus: Cytochrome b (380 aa).

4 consecutive transmembrane segments (helical) span residues 33–53 (FGSL…FLAM), 77–98 (WLIR…YLHV), 113–133 (WNIG…GYVL), and 178–198 (FFAF…LHLL). Residues H83 and H97 each contribute to the heme b site. Residues H182 and H196 each coordinate heme b. A ubiquinone is bound at residue H201. 4 consecutive transmembrane segments (helical) span residues 226-246 (YKDL…ALFS), 288-308 (LGGV…PLLH), 320-340 (LTQI…WIGG), and 347-367 (FITV…IFIP).

It belongs to the cytochrome b family. As to quaternary structure, the cytochrome bc1 complex contains 3 respiratory subunits (MT-CYB, CYC1 and UQCRFS1), 2 core proteins (UQCRC1 and UQCRC2) and probably 6 low-molecular weight proteins. Heme b is required as a cofactor.

The protein resides in the mitochondrion inner membrane. In terms of biological role, component of the ubiquinol-cytochrome c reductase complex (complex III or cytochrome b-c1 complex) that is part of the mitochondrial respiratory chain. The b-c1 complex mediates electron transfer from ubiquinol to cytochrome c. Contributes to the generation of a proton gradient across the mitochondrial membrane that is then used for ATP synthesis. The polypeptide is Cytochrome b (mt-cyb) (Neocyttus rhomboidalis (Spiky oreo dory)).